A 214-amino-acid chain; its full sequence is Leucyl/phenylalanyl-tRNA--protein transferase (214 aa).

The protein belongs to the L/F-transferase family.

It localises to the cytoplasm. The enzyme catalyses N-terminal L-lysyl-[protein] + L-leucyl-tRNA(Leu) = N-terminal L-leucyl-L-lysyl-[protein] + tRNA(Leu) + H(+). It catalyses the reaction N-terminal L-arginyl-[protein] + L-leucyl-tRNA(Leu) = N-terminal L-leucyl-L-arginyl-[protein] + tRNA(Leu) + H(+). It carries out the reaction L-phenylalanyl-tRNA(Phe) + an N-terminal L-alpha-aminoacyl-[protein] = an N-terminal L-phenylalanyl-L-alpha-aminoacyl-[protein] + tRNA(Phe). Functions in the N-end rule pathway of protein degradation where it conjugates Leu, Phe and, less efficiently, Met from aminoacyl-tRNAs to the N-termini of proteins containing an N-terminal arginine or lysine. This chain is Leucyl/phenylalanyl-tRNA--protein transferase, found in Cereibacter sphaeroides (strain ATCC 17029 / ATH 2.4.9) (Rhodobacter sphaeroides).